The primary structure comprises 366 residues: Anhydro-N-acetylmuramic acid kinase (366 aa).

Residue 10–17 (GTSMDGID) participates in ATP binding.

Belongs to the anhydro-N-acetylmuramic acid kinase family.

The enzyme catalyses 1,6-anhydro-N-acetyl-beta-muramate + ATP + H2O = N-acetyl-D-muramate 6-phosphate + ADP + H(+). The protein operates within amino-sugar metabolism; 1,6-anhydro-N-acetylmuramate degradation. Its pathway is cell wall biogenesis; peptidoglycan recycling. Functionally, catalyzes the specific phosphorylation of 1,6-anhydro-N-acetylmuramic acid (anhMurNAc) with the simultaneous cleavage of the 1,6-anhydro ring, generating MurNAc-6-P. Is required for the utilization of anhMurNAc either imported from the medium or derived from its own cell wall murein, and thus plays a role in cell wall recycling. This Legionella pneumophila (strain Corby) protein is Anhydro-N-acetylmuramic acid kinase.